The sequence spans 272 residues: Putative pyruvate, phosphate dikinase regulatory protein (272 aa).

Residue 153–160 coordinates ADP; sequence GVSRTSKT.

This sequence belongs to the pyruvate, phosphate/water dikinase regulatory protein family. PDRP subfamily.

The enzyme catalyses N(tele)-phospho-L-histidyl/L-threonyl-[pyruvate, phosphate dikinase] + ADP = N(tele)-phospho-L-histidyl/O-phospho-L-threonyl-[pyruvate, phosphate dikinase] + AMP + H(+). It catalyses the reaction N(tele)-phospho-L-histidyl/O-phospho-L-threonyl-[pyruvate, phosphate dikinase] + phosphate + H(+) = N(tele)-phospho-L-histidyl/L-threonyl-[pyruvate, phosphate dikinase] + diphosphate. Functionally, bifunctional serine/threonine kinase and phosphorylase involved in the regulation of the pyruvate, phosphate dikinase (PPDK) by catalyzing its phosphorylation/dephosphorylation. The polypeptide is Putative pyruvate, phosphate dikinase regulatory protein (Streptococcus sanguinis (strain SK36)).